Here is a 486-residue protein sequence, read N- to C-terminus: Malonate-semialdehyde dehydrogenase (486 aa).

5 residues coordinate NAD(+): Phe-154, Lys-178, Glu-181, Arg-182, and Ser-231. Cys-286 serves as the catalytic Nucleophile. Position 386 (Glu-386) interacts with NAD(+).

It belongs to the aldehyde dehydrogenase family. IolA subfamily. In terms of assembly, homotetramer.

It catalyses the reaction 3-oxopropanoate + NAD(+) + CoA + H2O = hydrogencarbonate + acetyl-CoA + NADH + H(+). The catalysed reaction is 2-methyl-3-oxopropanoate + NAD(+) + CoA + H2O = propanoyl-CoA + hydrogencarbonate + NADH + H(+). Its pathway is polyol metabolism; myo-inositol degradation into acetyl-CoA; acetyl-CoA from myo-inositol: step 7/7. Functionally, catalyzes the oxidation of malonate semialdehyde (MSA) and methylmalonate semialdehyde (MMSA) into acetyl-CoA and propanoyl-CoA, respectively. Is involved in a myo-inositol catabolic pathway. Bicarbonate, and not CO2, is the end-product of the enzymatic reaction. This Bacillus cereus (strain ATCC 10987 / NRS 248) protein is Malonate-semialdehyde dehydrogenase.